A 186-amino-acid polypeptide reads, in one-letter code: Dynactin subunit 3 (186 aa).

A2 carries the post-translational modification N-acetylalanine. Residues 135 to 157 (QQQDQCVEITEESKALLEEYNKT) are a coiled coil.

The protein belongs to the dynactin subunit 3 family. Subunit of dynactin, a multiprotein complex part of a tripartite complex with dynein and a adapter, such as BICDL1, BICD2 or HOOK3. The dynactin complex is built around ACTR1A/ACTB filament and consists of an actin-related filament composed of a shoulder domain, a pointed end and a barbed end. Its length is defined by its flexible shoulder domain. The soulder is composed of 2 DCTN1 subunits, 4 DCTN2 and 2 DCTN3. The 4 DCNT2 (via N-terminus) bind the ACTR1A filament and act as molecular rulers to determine the length. The pointed end is important for binding dynein-dynactin cargo adapters. Consists of 4 subunits: ACTR10, DCNT4, DCTN5 and DCTN6. The barbed end is composed of a CAPZA1:CAPZB heterodimers, which binds ACTR1A/ACTB filament and dynactin and stabilizes dynactin. Ubiquitously expressed. Highly expressed in muscle and pancreas and detected at lower levels in brain.

It localises to the cytoplasm. The protein resides in the cytoskeleton. Its subcellular location is the microtubule organizing center. It is found in the centrosome. The protein localises to the chromosome. It localises to the centromere. The protein resides in the kinetochore. Its subcellular location is the spindle. It is found in the cleavage furrow. The protein localises to the midbody. Functionally, part of the dynactin complex that activates the molecular motor dynein for ultra-processive transport along microtubules. Together with dynein may be involved in spindle assembly and cytokinesis. In Homo sapiens (Human), this protein is Dynactin subunit 3.